A 352-amino-acid chain; its full sequence is C5a anaphylatoxin chemotactic receptor 1 (352 aa).

Topologically, residues 1-38 (MASMNFSPPEYPDYGTATLDPNIFVDESLNTPKLSVPD) are extracellular. Sulfotyrosine occurs at positions 11 and 14. Residues 39 to 65 (MIALVIFVMVFLVGVPGNFLVVWVTGF) traverse the membrane as a helical segment. The Cytoplasmic portion of the chain corresponds to 66–70 (EVRRT). The helical transmembrane segment at 71-94 (INAIWFLNLAVADLLSCLALPILF) threads the bilayer. The Extracellular segment spans residues 95 to 111 (SSIVQQGYWPFGNAACR). C110 and C189 are joined by a disulfide. A helical membrane pass occupies residues 112–133 (ILPSLILLNMYASILLLTTISA). Residues 134 to 154 (DRFVLVFNPIWCQNYRGPQLA) are Cytoplasmic-facing. The helical transmembrane segment at 155–175 (WAACSVAWAVALLLTVPSFIF) threads the bilayer. Residues 176–202 (RGVHTEYFPFWMTCGVDYSGVGVLVER) are Extracellular-facing. The helical transmembrane segment at 203–228 (GVAILRLLMGFLGPLVILSICYTFLL) threads the bilayer. At 229–244 (IRTWSRKATRSTKTLK) the chain is on the cytoplasmic side. A helical transmembrane segment spans residues 245-267 (VVVAVVVSFFVLWLPYQVTGMMM). Residues 268–284 (ALFYKHSESFRRVSRLD) are Extracellular-facing. A helical transmembrane segment spans residues 285 to 305 (SLCVAVAYINCCINPIIYVLA). The Cytoplasmic segment spans residues 306-352 (AQGFHSRFLKSLPARLRQVLAEESVGRDSKSITLSTVDTPAQKSQGV). 5 positions are modified to phosphoserine: S316, S329, S334, S336, and S340.

Belongs to the G-protein coupled receptor 1 family. As to quaternary structure, homodimer. May also form higher-order oligomers. Interacts (when phosphorylated) with ARRB1 and ARRB2; the interaction is associated with internalization of C5aR. Post-translationally, sulfation plays a critical role in the association of C5aR with C5a, but no significant role in the ability of the receptor to transduce a signal and mobilize calcium in response to a small peptide agonist. In terms of processing, phosphorylated on serine residues in response to C5a binding, resulting in internalization of the receptor and short-term desensitization to C5a.

The protein resides in the cell membrane. Its subcellular location is the cytoplasmic vesicle. Its function is as follows. Receptor for the chemotactic and inflammatory peptide anaphylatoxin C5a. The ligand interacts with at least two sites on the receptor: a high-affinity site on the extracellular N-terminus, and a second site in the transmembrane region which activates downstream signaling events. Receptor activation stimulates chemotaxis, granule enzyme release, intracellular calcium release and superoxide anion production. In Canis lupus familiaris (Dog), this protein is C5a anaphylatoxin chemotactic receptor 1 (C5AR1).